Here is a 117-residue protein sequence, read N- to C-terminus: Immunoglobulin heavy variable 3-48 (117 aa).

The N-terminal stretch at 1-19 (MELGLCWVFLVAILEGVQC) is a signal peptide. Residues 20 to 44 (EVQLVESGGGLVQPGGSLRLSCAAS) form a framework-1 region. Residues 20–117 (EVQLVESGGG…EDTAVYYCAR (98 aa)) form the Ig-like domain. A disulfide bridge links cysteine 41 with cysteine 115. The interval 45–52 (GFTFSSYE) is complementarity-determining-1. Residues 53–69 (MNWVRQAPGKGLEWVSY) form a framework-2 region. A complementarity-determining-2 region spans residues 70–77 (ISSSGSTI). The segment at 78-115 (YYADSVKGRFTISRDNAKNSLYLQMNSLRAEDTAVYYC) is framework-3. The segment at 116 to 117 (AR) is complementarity-determining-3.

As to quaternary structure, immunoglobulins are composed of two identical heavy chains and two identical light chains; disulfide-linked. Post-translationally, the N-terminus is blocked.

It is found in the secreted. The protein resides in the cell membrane. Its function is as follows. V region of the variable domain of immunoglobulin heavy chains that participates in the antigen recognition. Immunoglobulins, also known as antibodies, are membrane-bound or secreted glycoproteins produced by B lymphocytes. In the recognition phase of humoral immunity, the membrane-bound immunoglobulins serve as receptors which, upon binding of a specific antigen, trigger the clonal expansion and differentiation of B lymphocytes into immunoglobulins-secreting plasma cells. Secreted immunoglobulins mediate the effector phase of humoral immunity, which results in the elimination of bound antigens. The antigen binding site is formed by the variable domain of one heavy chain, together with that of its associated light chain. Thus, each immunoglobulin has two antigen binding sites with remarkable affinity for a particular antigen. The variable domains are assembled by a process called V-(D)-J rearrangement and can then be subjected to somatic hypermutations which, after exposure to antigen and selection, allow affinity maturation for a particular antigen. In Homo sapiens (Human), this protein is Immunoglobulin heavy variable 3-48.